Here is a 272-residue protein sequence, read N- to C-terminus: Cerberus (272 aa).

An N-terminal signal peptide occupies residues 1–19 (MSLLLLQLLVLSCLGDTEP). 4 cysteine pairs are disulfide-bonded: C168–C215, C182–C229, C192–C245, and C196–C247. The CTCK domain maps to 168 to 253 (CRTLPFSQSV…ECNCETQKIE (86 aa)). N228 is a glycosylation site (N-linked (GlcNAc...) asparagine).

Belongs to the DAN family.

The protein resides in the secreted. Its function is as follows. Cytokine that acts as a regulator of the activity of Nodal/BMP pathways during the establishment of bilateral asymmetry in the head and trunk of the embryo. In Gallus gallus (Chicken), this protein is Cerberus (CER1).